Here is a 251-residue protein sequence, read N- to C-terminus: uncharacterized protein (251 aa).

The N-terminal stretch at 1 to 25 (MSAGRLNKKSLGIVMLLSVGLLLAG) is a signal peptide. Cysteine 26 is lipidated: N-palmitoyl cysteine. A lipid anchor (S-diacylglycerol cysteine) is attached at cysteine 26. Positions 40-84 (SVYTVKRGDTLYRISRTTGTSVKELARLNGISPPYTIEVGQKLKL) constitute a LysM domain. A compositionally biased stretch (low complexity) spans 93–112 (TRKSTAKSTTKTASVTPSSA). The disordered stretch occupies residues 93 to 115 (TRKSTAKSTTKTASVTPSSAVPK).

It belongs to the peptidase M23B family.

The protein localises to the cell inner membrane. This is an uncharacterized protein from Escherichia coli (strain K12).